The sequence spans 189 residues: Peptidyl-tRNA hydrolase (189 aa).

Tyr15 is a tRNA binding site. The active-site Proton acceptor is the His20. The tRNA site is built by Tyr65, Asn67, and Asn113.

This sequence belongs to the PTH family. In terms of assembly, monomer.

The protein resides in the cytoplasm. It catalyses the reaction an N-acyl-L-alpha-aminoacyl-tRNA + H2O = an N-acyl-L-amino acid + a tRNA + H(+). Hydrolyzes ribosome-free peptidyl-tRNAs (with 1 or more amino acids incorporated), which drop off the ribosome during protein synthesis, or as a result of ribosome stalling. Functionally, catalyzes the release of premature peptidyl moieties from peptidyl-tRNA molecules trapped in stalled 50S ribosomal subunits, and thus maintains levels of free tRNAs and 50S ribosomes. The chain is Peptidyl-tRNA hydrolase from Caldicellulosiruptor saccharolyticus (strain ATCC 43494 / DSM 8903 / Tp8T 6331).